A 493-amino-acid polypeptide reads, in one-letter code: MTALNELTLAEARDGLKAKDFSAREIAQAHLDAIERAKALNAYIVATPDRALKMADVSDEKIAKGEARPLEGLPLGIKDLFATQGVHTTAGSKILEGFEPHYESNVSSQLWRDGAVMLGKLNLDEFAMGSSNETSAYGKTISPWRRQGSDTPLVPGGSSGGSAAAVAAHLCLGATATDTGGSIRQPAAFTGTVGIKPTYGRCSRWGIIAYASSLDQAGPIARTVQDCAILLGSMAGHDPRDTTSVDVPVPDFEAAITRGVKGLTIGIPKEYRVEGMPAEIQRLWDQGADWLREAGATVREISLPHTQYALPAYYIVAPAEASSNLARYDGVRYGLRVPGRDIAGMYENTRAAGFGREVKRRIMIGTYVLSAGYYDAYYVRAQKIRTLIKRDFEAAYASGIDAILTPATPSAAFGIGEMASADPVEMYLNDVFTVTVNMAGLPGISVPAGLDAQGLPLGLQLIGRPFDEETLFAAAQTIENAAGRISLPKAWWA.

Catalysis depends on charge relay system residues Lys78 and Ser158. Catalysis depends on Ser182, which acts as the Acyl-ester intermediate.

The protein belongs to the amidase family. GatA subfamily. As to quaternary structure, heterotrimer of A, B and C subunits.

It carries out the reaction L-glutamyl-tRNA(Gln) + L-glutamine + ATP + H2O = L-glutaminyl-tRNA(Gln) + L-glutamate + ADP + phosphate + H(+). Its function is as follows. Allows the formation of correctly charged Gln-tRNA(Gln) through the transamidation of misacylated Glu-tRNA(Gln) in organisms which lack glutaminyl-tRNA synthetase. The reaction takes place in the presence of glutamine and ATP through an activated gamma-phospho-Glu-tRNA(Gln). The polypeptide is Glutamyl-tRNA(Gln) amidotransferase subunit A (Methylorubrum populi (strain ATCC BAA-705 / NCIMB 13946 / BJ001) (Methylobacterium populi)).